We begin with the raw amino-acid sequence, 347 residues long: F-box/kelch-repeat protein At5g03020 (347 aa).

A disordered region spans residues 1 to 21; it reads MTEEMSKESPPPPPTSFSSLP. In terms of domain architecture, F-box spans 14–62; sequence PTSFSSLPDDVALDCRARISRFHYPTLSLVSKGFRTLIASPELEATRSF. Kelch repeat units follow at residues 119 to 165 and 167 to 215; these read QIYI…VIDG and IYVI…KKKH.

In Arabidopsis thaliana (Mouse-ear cress), this protein is F-box/kelch-repeat protein At5g03020.